The following is a 299-amino-acid chain: dTDP-4-dehydrorhamnose reductase (299 aa).

Residues 10–12 (GQV), Asp-30, 39–40 (DF), and 63–65 (AHT) contribute to the NADH site. 11-12 (QV) provides a ligand contact to NADPH. NADPH is bound by residues 39-40 (DF), 63-65 (AHT), and Tyr-102. Residue 104–105 (TD) coordinates dTDP-beta-L-rhamnose. NADH-binding residues include Tyr-128 and Lys-132. The NADPH site is built by Tyr-128 and Lys-132. Catalysis depends on Tyr-128, which acts as the Proton donor/acceptor. A dTDP-beta-L-rhamnose-binding site is contributed by Trp-153.

Belongs to the dTDP-4-dehydrorhamnose reductase family. As to quaternary structure, homodimer. It depends on Mg(2+) as a cofactor.

It carries out the reaction dTDP-beta-L-rhamnose + NADP(+) = dTDP-4-dehydro-beta-L-rhamnose + NADPH + H(+). It participates in carbohydrate biosynthesis; dTDP-L-rhamnose biosynthesis. It functions in the pathway bacterial outer membrane biogenesis; LPS O-antigen biosynthesis. In terms of biological role, involved in the biosynthesis of the dTDP-L-rhamnose which is an important component of lipopolysaccharide (LPS). Catalyzes the reduction of dTDP-6-deoxy-L-lyxo-4-hexulose to yield dTDP-L-rhamnose. RmlD uses NADH and NADPH nearly equally well. The protein is dTDP-4-dehydrorhamnose reductase of Escherichia coli (strain K12).